Here is a 678-residue protein sequence, read N- to C-terminus: WD repeat-containing protein 48 (678 aa).

WD repeat units lie at residues 28-67 (YNRN…QDPY), 73-112 (HHTD…CMST), 115-154 (THKD…ALTA), 166-205 (GNKD…KLMK), 208-247 (GHTD…CIAT), 250-289 (VHDE…IRVL), 292-334 (EEKA…NFRA), and 358-452 (KGGA…GFSS). The interval 608–629 (LDNESQTTSSSNNEKAGEQEKE) is disordered. The segment covering 610–621 (NESQTTSSSNNE) has biased composition (low complexity).

The protein belongs to the WD repeat WDR48 family.

It is found in the nucleus. The protein localises to the cytoplasm. It localises to the lysosome. The protein resides in the late endosome. Regulator of deubiquitinating complexes, which acts as a strong activator of USP1, USP12 and USP46. Enhances the USP1-mediated deubiquitination of FANCD2; USP1 being almost inactive by itself. Activates deubiquitination by increasing the catalytic turnover without increasing the affinity of deubiquitinating enzymes for the substrate. Also activates deubiquitinating activity of complexes containing USP12. Docks at the distal end of the USP12 fingers domain and induces a cascade of structural changes leading to the activation of the enzyme. Together with RAD51AP1, promotes DNA repair by stimulating RAD51-mediated homologous recombination. Binds single-stranded DNA (ssDNA) and double-stranded DNA (dsDNA). DNA-binding is required both for USP1-mediated deubiquitination of FANCD2 and stimulation of RAD51-mediated homologous recombination: both WDR48/UAF1 and RAD51AP1 have coordinated role in DNA-binding during these processes. Together with ATAD5 and by regulating USP1 activity, has a role in PCNA-mediated translesion synthesis (TLS) by deubiquitinating monoubiquitinated PCNA. Together with ATAD5, has a role in recruiting RAD51 to stalled forks during replication stress. This chain is WD repeat-containing protein 48 (WDR48), found in Gallus gallus (Chicken).